The primary structure comprises 278 residues: MIPLHENLAGKTAVITGGSGVLCSAMARELARHGMKVAILNRTAEKGQAVVKEITAAGGTACAVAADVLDRMSLERAKEDILGQFGAVDLLINGAGGNHPDAITDVETYEEAGEGQSFFDMDERGFLTVFSTNFTGAFLASQVFGKELLKADSPAIINLSSMSAYSPMTKVPAYSAAKASINNFTMWMAVHFAETGLRVNAIAPGFFLTKQNHDLLINQDGTFTSRSHKIIAGTPMKRFGKPEDLLGTLLWLADESYSGFVTGITVPVDGGFMAYSGV.

It belongs to the short-chain dehydrogenases/reductases (SDR) family.

This is an uncharacterized protein from Bacillus subtilis (strain 168).